Here is a 273-residue protein sequence, read N- to C-terminus: E3 ubiquitin-protein ligase SDIR1 (273 aa).

At 1 to 33 (MSFVFRGSRGDLESGFSGGFLPERRAMRVHGAR) the chain is on the cytoplasmic side. Residues 34-54 (PVNSNSLAFLVTVLLLFMILN) traverse the membrane as a helical segment. The Lumenal portion of the chain corresponds to 55–56 (SH). A helical membrane pass occupies residues 57 to 77 (QMPPNFLLWLVLGVFLMATTL). Topologically, residues 78-273 (RMYATCQQLQ…EIDDDASDMV (196 aa)) are cytoplasmic. The RING-type; atypical zinc-finger motif lies at 211–252 (CSVCLEQVTVGEIVRTLPCLHQFHAGCIDPWLRQQGTCPVCK).

In terms of assembly, interacts with ATP1/SDIRIP1. Ubiquitous.

It localises to the endoplasmic reticulum membrane. The catalysed reaction is S-ubiquitinyl-[E2 ubiquitin-conjugating enzyme]-L-cysteine + [acceptor protein]-L-lysine = [E2 ubiquitin-conjugating enzyme]-L-cysteine + N(6)-ubiquitinyl-[acceptor protein]-L-lysine.. In terms of biological role, E3 ubiquitin-protein ligase that acts as a positive regulator of abscisic acid-related stress signal transduction. Interacts with and ubiquitinates ATP1/SDIRIP1 to modulate ATP1/SDIRIP1 stability through the 26S proteasome pathway. Regulates abscisic acid (ABA) and salt stress responses by negatively affecting ATP1/SDIRIP1 stability. The SDIR1-ATP1/SDIRIP1 complex plays an important role in ABA signaling through the ubiquitination pathway. The chain is E3 ubiquitin-protein ligase SDIR1 from Arabidopsis thaliana (Mouse-ear cress).